The following is a 97-amino-acid chain: YcgL domain-containing protein Psyr_1564 (97 aa).

The YcgL domain maps to 3 to 87; the sequence is RICSIYRSPK…AEDDYIEHLP (85 aa).

The protein is YcgL domain-containing protein Psyr_1564 of Pseudomonas syringae pv. syringae (strain B728a).